Consider the following 35-residue polypeptide: Photosystem II reaction center protein T (35 aa).

Residues 3-23 (ALVYTFLLVSTLGIIFFAIFF) form a helical membrane-spanning segment.

It belongs to the PsbT family. As to quaternary structure, PSII is composed of 1 copy each of membrane proteins PsbA, PsbB, PsbC, PsbD, PsbE, PsbF, PsbH, PsbI, PsbJ, PsbK, PsbL, PsbM, PsbT, PsbY, PsbZ, Psb30/Ycf12, at least 3 peripheral proteins of the oxygen-evolving complex and a large number of cofactors. It forms dimeric complexes.

It is found in the plastid. It localises to the chloroplast thylakoid membrane. In terms of biological role, found at the monomer-monomer interface of the photosystem II (PS II) dimer, plays a role in assembly and dimerization of PSII. PSII is a light-driven water plastoquinone oxidoreductase, using light energy to abstract electrons from H(2)O, generating a proton gradient subsequently used for ATP formation. The sequence is that of Photosystem II reaction center protein T from Ginkgo biloba (Ginkgo).